Reading from the N-terminus, the 415-residue chain is Ankyrin repeat domain-containing protein 10 (415 aa).

ANK repeat units follow at residues 20–49 (SLRF…RAHL), 56–85 (YGWT…SLNV), 90–119 (YAQT…NINK), and 123–152 (EGET…HTDL). Over residues 303-325 (TGSNGVSNGQPLSSGQASVSANG) the composition is skewed to polar residues. The tract at residues 303–330 (TGSNGVSNGQPLSSGQASVSANGTEEPE) is disordered.

The sequence is that of Ankyrin repeat domain-containing protein 10 (Ankrd10) from Mus musculus (Mouse).